The primary structure comprises 253 residues: NAC transcription factor 32 (253 aa).

Residues 10 to 160 (FPPGFRFHPT…DWVLCRIYNK (151 aa)) enclose the NAC domain. A DNA-binding region spans residues 106–166 (VGIKKALVFY…IYNKKGVIEK (61 aa)).

In terms of tissue distribution, expressed in germinating seeds, roots, leaf veins, open flowers and silique stalks.

Its subcellular location is the nucleus. Functionally, transcriptional activator that positively regulates age-dependent senescence, dark-induced leaf senescence and stress-induced senescence. Regulates leaf senescence through the modulation of the expression of senescence-associated genes SGR1/NYE1, SAG113 and SAUR36/SAG201, which are involved in chlorophyll degradation, and abscisic acid (ABA) and auxin promotion of senescence, respectively. Promotes reactive oxygen species (ROS) production during age-dependent and stress-induced senescence. Positively regulates auxin-mediated responses in roots. Stress-responsive NAC transcription factor involved in ABA-inducible leaf senescence signaling. Required for normal seed development and morphology. This is NAC transcription factor 32 from Arabidopsis thaliana (Mouse-ear cress).